A 268-amino-acid polypeptide reads, in one-letter code: Tryptophan synthase alpha chain (268 aa).

Residues E49 and D60 each act as proton acceptor in the active site.

This sequence belongs to the TrpA family. In terms of assembly, tetramer of two alpha and two beta chains.

The enzyme catalyses (1S,2R)-1-C-(indol-3-yl)glycerol 3-phosphate + L-serine = D-glyceraldehyde 3-phosphate + L-tryptophan + H2O. Its pathway is amino-acid biosynthesis; L-tryptophan biosynthesis; L-tryptophan from chorismate: step 5/5. The alpha subunit is responsible for the aldol cleavage of indoleglycerol phosphate to indole and glyceraldehyde 3-phosphate. The polypeptide is Tryptophan synthase alpha chain (Escherichia coli (strain 55989 / EAEC)).